The chain runs to 493 residues: Glutamyl-tRNA(Gln) amidotransferase subunit A (493 aa).

Active-site charge relay system residues include lysine 78 and serine 158. Serine 182 (acyl-ester intermediate) is an active-site residue.

The protein belongs to the amidase family. GatA subfamily. Heterotrimer of A, B and C subunits.

It carries out the reaction L-glutamyl-tRNA(Gln) + L-glutamine + ATP + H2O = L-glutaminyl-tRNA(Gln) + L-glutamate + ADP + phosphate + H(+). Allows the formation of correctly charged Gln-tRNA(Gln) through the transamidation of misacylated Glu-tRNA(Gln) in organisms which lack glutaminyl-tRNA synthetase. The reaction takes place in the presence of glutamine and ATP through an activated gamma-phospho-Glu-tRNA(Gln). This chain is Glutamyl-tRNA(Gln) amidotransferase subunit A, found in Rickettsia bellii (strain OSU 85-389).